The chain runs to 1082 residues: MRKNSTSNPSPSHQFLTPPKNTTTVVNNNNNTFVNKNKIINENSNQKMFSVGSLVNQIDKNQQQQQQQQQQTHQVLPQRKFSGVSTMISKYNEQQPSSSSSTASSSSSPSLPPKPLLSTINNINNSGSANNNTPSNLSPNTLSPTSIIKKNNNNNISGSPSPSPSPAPTPTILSPLPSPRRQLPTRPPSPLPKLPSRPTSPVPPNPDEALNTTTTNNNNNNNNNNNNNNNNNNNNNNNNNNNNNSDNNYISKLGSHSVKTLPIPPPNDKPAPPPRPWSSSGTLTTPPTIATTKTSTNINSTNVKYQTLSPSSTTATTATTTTTINNNVTTPPTTPPSQTIAFNNNNNNNNNNNNNNNNNNNSNNNKPLPPTSTKPPRPKIAPRNDISPIPVTSLSTANITNTPTVVIEQTPIIAPIQDSQNIAASDLRTLRQRTFTRKQASMKLNGEDFSSLSLSTTPTSVSPSTPSSANPTPSTTPPSMSPSNSVSNEFLTINSNENINNDLINSFNSDDSNNSNNSNSSLSLASASSSASTTTTSTNSLNDTSFNNISININPNNGLSVSNFISSHKKKTSFISGTLRRDTLDIKTILIEKINVQYTITTQLSQKPSRKSLLPPINSSTSFNKVIKEIIETEADYIDQMEVIINLYYFAALEMSKYKLMTANDIYQIFSNIEELYYVSLRLYPMLLNIIPVLDHENQYPNIEEIFLYNSKAFQRYGSYLSTHDHSIKVLNSLIDGNNVVNQIFQYVKSLPHSKQLNLQSFLIKPCQRLCKYPLLLRELKKALPPEDDSLEAEEHHKIFQRSLILMEKIVNDINGKMANDNKIQSTVKEIGTKDIEQQLRDQTFLKSSNRIKKLKKKGNKVIVTLYLLSQILIIFEKGTFKKKVKIIPLKNILEIIDIERELQFGISINYLNDNDIQNNNNNNQNNLSSTNDTTSSTPPTTTTTTNSTPTTTTTTTNSTPTVNVNTLSIKLSCDNYQDKLIWLNDIDEAINILKILTGSYKFNVSEKDINININNNNNNNNNNNNNNNNNNNNNNNNNNNNNNNINENNINENNINSNNTSLENSGECINNNINNNNNTSN.

Polar residues predominate over residues 1 to 15 (MRKNSTSNPSPSHQF). Disordered stretches follow at residues 1 to 29 (MRKNSTSNPSPSHQFLTPPKNTTTVVNNN), 59 to 78 (DKNQQQQQQQQQQTHQVLPQ), 91 to 394 (YNEQ…VTSL), 438 to 488 (KQAS…SVSN), and 504 to 524 (INSFNSDDSNNSNNSNSSLSL). Low complexity-rich tracts occupy residues 20 to 29 (KNTTTVVNNN), 62 to 71 (QQQQQQQQQQ), 96 to 109 (PSSSSSTASSSSSP), 116 to 160 (LLST…SGSP), and 170 to 184 (PTILSPLPSPRRQLP). A compositionally biased stretch (pro residues) spans 185–206 (TRPPSPLPKLPSRPTSPVPPNP). Residues 211–244 (NTTTTNNNNNNNNNNNNNNNNNNNNNNNNNNNNN) are compositionally biased toward low complexity. Residues 262–276 (PIPPPNDKPAPPPRP) are compositionally biased toward pro residues. Residues 282–366 (TLTTPPTIAT…NNNNNSNNNK (85 aa)) are compositionally biased toward low complexity. Pro residues predominate over residues 367–379 (PLPPTSTKPPRPK). The span at 450 to 473 (SSLSLSTTPTSVSPSTPSSANPTP) shows a compositional bias: low complexity. The DH domain maps to 622 to 817 (SFNKVIKEII…EKIVNDINGK (196 aa)). A PH-like region spans residues 838 to 994 (QQLRDQTFLK…NDIDEAINIL (157 aa)). Disordered stretches follow at residues 920–961 (NNNN…NSTP) and 1017–1060 (NNNN…NSNN).

Its function is as follows. GTPase-activating protein. This is RhoGEF domain-containing protein gxcI (gxcI) from Dictyostelium discoideum (Social amoeba).